The primary structure comprises 122 residues: MALDVDGIIAQLKDASILELNDLVKSIEDEFGVKAAAPVAAGAAAGADAAAAKDTYDVELTEAGQEKVKVIKAVREITGLGLKDAKGMVDAAPKVIKEGLSEDDANKLKEQLEGVGATVTLK.

Belongs to the bacterial ribosomal protein bL12 family. In terms of assembly, homodimer. Part of the ribosomal stalk of the 50S ribosomal subunit. Forms a multimeric L10(L12)X complex, where L10 forms an elongated spine to which 2 to 4 L12 dimers bind in a sequential fashion. Binds GTP-bound translation factors.

Forms part of the ribosomal stalk which helps the ribosome interact with GTP-bound translation factors. Is thus essential for accurate translation. The chain is Large ribosomal subunit protein bL12 from Lacticaseibacillus casei (strain BL23) (Lactobacillus casei).